The following is a 215-amino-acid chain: Ribosomal RNA small subunit methyltransferase G (215 aa).

S-adenosyl-L-methionine-binding positions include Gly-77, Phe-82, 130-131, and Arg-146; that span reads IE.

The protein belongs to the methyltransferase superfamily. RNA methyltransferase RsmG family.

Its subcellular location is the cytoplasm. It carries out the reaction guanosine(527) in 16S rRNA + S-adenosyl-L-methionine = N(7)-methylguanosine(527) in 16S rRNA + S-adenosyl-L-homocysteine. Specifically methylates the N7 position of guanine in position 527 of 16S rRNA. The polypeptide is Ribosomal RNA small subunit methyltransferase G (Bartonella quintana (strain Toulouse) (Rochalimaea quintana)).